Here is a 345-residue protein sequence, read N- to C-terminus: Hydroxymethylglutaryl-CoA synthase (345 aa).

Residue aspartate 28 coordinates (3S)-3-hydroxy-3-methylglutaryl-CoA. Glutamate 80 acts as the Proton donor/acceptor in catalysis. Cysteine 112 and threonine 153 together coordinate (3S)-3-hydroxy-3-methylglutaryl-CoA. Catalysis depends on cysteine 112, which acts as the Acyl-thioester intermediate. CoA is bound at residue arginine 199. (3S)-3-hydroxy-3-methylglutaryl-CoA-binding residues include threonine 201 and histidine 234. Histidine 234 acts as the Proton donor/acceptor in catalysis. Lysine 239 is a binding site for CoA. 3 residues coordinate (3S)-3-hydroxy-3-methylglutaryl-CoA: arginine 243, asparagine 266, and serine 296.

Belongs to the thiolase-like superfamily. Archaeal HMG-CoA synthase family. Interacts with acetoacetyl-CoA thiolase that catalyzes the precedent step in the pathway and with a DUF35 protein. The acetoacetyl-CoA thiolase/HMG-CoA synthase complex channels the intermediate via a fused CoA-binding site, which allows for efficient coupling of the endergonic thiolase reaction with the exergonic HMGCS reaction.

It carries out the reaction acetoacetyl-CoA + acetyl-CoA + H2O = (3S)-3-hydroxy-3-methylglutaryl-CoA + CoA + H(+). It participates in metabolic intermediate biosynthesis; (R)-mevalonate biosynthesis; (R)-mevalonate from acetyl-CoA: step 2/3. In terms of biological role, catalyzes the condensation of acetyl-CoA with acetoacetyl-CoA to form 3-hydroxy-3-methylglutaryl-CoA (HMG-CoA). Functions in the mevalonate (MVA) pathway leading to isopentenyl diphosphate (IPP), a key precursor for the biosynthesis of isoprenoid compounds that are building blocks of archaeal membrane lipids. This Methanobrevibacter smithii (strain ATCC 35061 / DSM 861 / OCM 144 / PS) protein is Hydroxymethylglutaryl-CoA synthase.